The primary structure comprises 243 residues: MNVSQDTIYAQASEHISDFQFDNRVAGVFSDMIRRSVPGYTQIINTIGDFADRFVMPNTQIYDLGCSLGAATLSIRRQIQGRQCRIIAVDNSESMVARCQENLNAYVSDTDVDLVCGDIRDIDIQNASLVVLNFTLQFLPPEDRETLIAKIYQGLNPGGILVLSEKIRFEDAPIQTLLEEQHLDFKRANGYSELEISQKRSALENVMKPDTLITHQQRLTSQGFSHFSLWFQCFNFASMVAIK.

S-adenosyl-L-methionine is bound by residues tyrosine 40, 65–67 (GCS), 90–91 (DN), 118–119 (DI), asparagine 133, and arginine 200.

This sequence belongs to the class I-like SAM-binding methyltransferase superfamily. Cx-SAM synthase family. Homodimer.

The enzyme catalyses prephenate + S-adenosyl-L-methionine = carboxy-S-adenosyl-L-methionine + 3-phenylpyruvate + H2O. Functionally, catalyzes the conversion of S-adenosyl-L-methionine (SAM) to carboxy-S-adenosyl-L-methionine (Cx-SAM). This Shewanella baltica (strain OS223) protein is Carboxy-S-adenosyl-L-methionine synthase.